The primary structure comprises 252 residues: Transmembrane ascorbate-dependent reductase CYB561 (252 aa).

N-acetylmethionine is present on methionine 1. The Cytoplasmic segment spans residues methionine 1 to tyrosine 17. A helical membrane pass occupies residues valine 18–methionine 38. One can recognise a Cytochrome b561 domain in the interval phenylalanine 20 to threonine 221. Residues tyrosine 39–asparagine 52 are Vesicular-facing. Residues valine 53–tyrosine 73 traverse the membrane as a helical segment. 3 residues coordinate heme b: histidine 54, arginine 74, and lysine 81. Residues arginine 74–valine 86 are Cytoplasmic-facing. 2 residues coordinate L-ascorbate: lysine 81 and lysine 85. The chain crosses the membrane as a helical span at residues leucine 87 to phenylalanine 107. Residues histidine 88, aspartate 117–serine 120, and histidine 122 each bind heme b. Residues glutamate 108 to cysteine 125 lie on the Vesicular side of the membrane. Residues glycine 126–phenylalanine 146 traverse the membrane as a helical segment. The Cytoplasmic segment spans residues proline 147–proline 159. L-ascorbate is bound at residue arginine 154. The chain crosses the membrane as a helical span at residues glutamine 160–leucine 180. Histidine 161 and glutamate 182 together coordinate heme b. The Vesicular segment spans residues lysine 181–glycine 199. A helical transmembrane segment spans residues valine 200–leucine 220. Over threonine 221–glutamine 252 the chain is Cytoplasmic. Lysine 226 lines the heme b pocket. A phosphoserine mark is found at serine 248 and serine 250.

It depends on heme b as a cofactor. In terms of tissue distribution, expressed in the adrenal medulla and all brain regions, but not in visceral organs.

It is found in the cytoplasmic vesicle. It localises to the secretory vesicle. Its subcellular location is the chromaffin granule membrane. It catalyses the reaction monodehydro-L-ascorbate radical(out) + L-ascorbate(in) = monodehydro-L-ascorbate radical(in) + L-ascorbate(out). In terms of biological role, transmembrane reductase that uses ascorbate as an electron donor in the cytoplasm and transfers electrons across membranes to reduce monodehydro-L-ascorbate radical in the lumen of secretory vesicles. It is therefore involved the regeneration and homeostasis within secretory vesicles of ascorbate which in turn provides reducing equivalents needed to support the activity of intravesicular enzymes. The chain is Transmembrane ascorbate-dependent reductase CYB561 (CYB561) from Bos taurus (Bovine).